A 362-amino-acid chain; its full sequence is Probable peptidyl-prolyl cis-trans isomerase C27F1.06c (362 aa).

A Phosphoserine modification is found at serine 69. A disordered region spans residues 144–274; sequence DEFSSDEEEM…KVKGDGPAAK (131 aa). 2 stretches are compositionally biased toward acidic residues: residues 146-167 and 175-189; these read FSSD…EEEE and LNSD…EEEI. A Phosphoserine modification is found at serine 177. Positions 190 to 218 are enriched in basic and acidic residues; it reads LEKPVPKDEVAEKHSKDKLKKEEKEKKTA. In terms of domain architecture, PPIase FKBP-type spans 276–362; the sequence is KKRVSMRYIG…VFDVKLLAVN (87 aa).

It belongs to the FKBP-type PPIase family. FKBP3/4 subfamily.

It catalyses the reaction [protein]-peptidylproline (omega=180) = [protein]-peptidylproline (omega=0). Its function is as follows. PPIases accelerate the folding of proteins. It catalyzes the cis-trans isomerization of proline imidic peptide bonds in oligopeptides. This is Probable peptidyl-prolyl cis-trans isomerase C27F1.06c from Schizosaccharomyces pombe (strain 972 / ATCC 24843) (Fission yeast).